A 207-amino-acid chain; its full sequence is Ras-related protein Rab-7a (207 aa).

T2 carries the N-acetylthreonine modification. Residues S17, G18, V19, G20, K21, T22, S23, S34, N35, Y37, and T40 each coordinate GTP. Mg(2+) is bound at residue T22. A Switch 1 motif is present at residues Y28–I41. Residues T40 and D63 each contribute to the Mg(2+) site. G66 lines the GTP pocket. The Switch 2 signature appears at Q67–D82. The residue at position 72 (S72) is a Phosphoserine. Residues N125, K126, D128, A156, and K157 each coordinate GTP. Glycyl lysine isopeptide (Lys-Gly) (interchain with G-Cter in ubiquitin) cross-links involve residues K191 and K194. Residues C205 and C207 are each lipidated (S-geranylgeranyl cysteine). C207 carries the post-translational modification Cysteine methyl ester.

This sequence belongs to the small GTPase superfamily. Rab family. As to quaternary structure, interacts with NTRK1/TRKA. Interacts with RILP. Interacts with PSMA7. Interacts with RNF115. Interacts with FYCO1. Interacts with the PIK3C3/VPS34-PIK3R4 complex. The GTP-bound form interacts with OSBPL1A. The GTP-bound form interacts with RAC1. Interacts with CLN3. Interacts with CHM, the substrate-binding subunit of the Rab geranylgeranyltransferase complex. Interacts with C9orf72. Does not interact with HPS4 and the BLOC-3 complex (heterodimer of HPS1 and HPS4). Interacts with CLN5. Interacts with PLEKHM1 (via N- and C-terminus). Interacts with PRPH; the interaction is direct. Interacts with VPS13A. The GDP-bound form interacts with RIMOC1. Interacts with the MON1A-CCZ1B complex and this interaction is enhanced in the presence of RIMOC1. Interacts with VPS39 and VPS41. Forms a ternary complex with LAMP2 and RUFY4; the interaction with LAMP2 is mediated by RUFY4 (via RUN and coiled coil domains). Mg(2+) is required as a cofactor. Deubiquitination at Lys-191 and Lys-194 by USP32. Post-translationally, phosphorylated at Ser-72 by LRRK1; phosphorylation is dependent on protein kinase C (PKC) activation of LRRK1. In terms of processing, prenylated. Prenylation is required for association with cellular membranes.

The protein resides in the cytoplasmic vesicle. It is found in the phagosome membrane. Its subcellular location is the late endosome membrane. It localises to the lysosome membrane. The protein localises to the melanosome membrane. The protein resides in the autophagosome membrane. It is found in the lipid droplet. Its subcellular location is the endosome membrane. It localises to the mitochondrion membrane. It carries out the reaction GTP + H2O = GDP + phosphate + H(+). With respect to regulation, regulated by guanine nucleotide exchange factors (GEFs) which promote the exchange of bound GDP for free GTP. Regulated by GTPase activating proteins (GAPs) which increase the GTP hydrolysis activity. Inhibited by GDP dissociation inhibitors (GDIs). Its function is as follows. The small GTPases Rab are key regulators of intracellular membrane trafficking, from the formation of transport vesicles to their fusion with membranes. Rabs cycle between an inactive GDP-bound form and an active GTP-bound form that is able to recruit to membranes different sets of downstream effectors directly responsible for vesicle formation, movement, tethering and fusion. In its active state, RAB7A binds to a variety of effector proteins playing a key role in the regulation of endo-lysosomal trafficking. Governs early-to-late endosomal maturation, microtubule minus-end as well as plus-end directed endosomal migration and positioning, and endosome-lysosome transport through different protein-protein interaction cascades. Also plays a central role in growth-factor-mediated cell signaling, nutrient-transporter-mediated nutrient uptake, neurotrophin transport in the axons of neurons and lipid metabolism. Also involved in regulation of some specialized endosomal membrane trafficking, such as maturation of melanosomes, pathogen-induced phagosomes (or vacuoles) and autophagosomes. Plays a role in the maturation and acidification of phagosomes that engulf pathogens, such as S.aureus and Mycobacteria. Plays a role in the fusion of phagosomes with lysosomes. In concert with RAC1, plays a role in regulating the formation of RBs (ruffled borders) in osteoclasts. Controls the endosomal trafficking and neurite outgrowth signaling of NTRK1/TRKA. Regulates the endocytic trafficking of the EGF-EGFR complex by regulating its lysosomal degradation. Involved in the ADRB2-stimulated lipolysis through lipophagy, a cytosolic lipase-independent autophagic pathway. Required for the exosomal release of SDCBP, CD63 and syndecan. Required for vesicular trafficking and cell surface expression of ACE2. May play a role in PRPH neuronal intermediate filament assembly. This chain is Ras-related protein Rab-7a (RAB7A), found in Bos taurus (Bovine).